Here is a 780-residue protein sequence, read N- to C-terminus: APC membrane recruitment protein 3 (780 aa).

The span at 20–32 (KLIDSPAKEDPDK) shows a compositional bias: basic and acidic residues. 7 disordered regions span residues 20-59 (KLIDSPAKEDPDKWPLSLGEQQRAYGEKSSQTSPCSQGYG), 341-407 (ELPL…FPRD), 547-569 (KGREDQATTCFPPSRQEPWAHSG), 582-617 (GEPARGSKTPSKDDSLEEGTQDFSEGQSSSEATMTS), 635-659 (KELGTPGNLRYSQGPLRPGHRGSAL), 706-729 (KNPISSKPNEAAGCGLSSSASPQD), and 749-780 (LGPQACSSVDSQPQQLCPRAPEQVPHRGSVGS). The segment covering 354–376 (SKASSIDTGTPKSEQPESVSTSD) has biased composition (polar residues). Over residues 602–617 (QDFSEGQSSSEATMTS) the composition is skewed to polar residues. Polar residues predominate over residues 753–763 (ACSSVDSQPQQ).

This sequence belongs to the Amer family.

The protein localises to the cell membrane. In terms of biological role, regulator of the canonical Wnt signaling pathway. Acts by specifically binding phosphatidylinositol 4,5-bisphosphate (PtdIns(4,5)P2), translocating to the cell membrane. This chain is APC membrane recruitment protein 3 (Amer3), found in Mus musculus (Mouse).